The following is a 467-amino-acid chain: Acetyl-CoA decarbonylase/synthase complex subunit beta (467 aa).

Residues Cys-193, Cys-196, Cys-282, and Cys-284 each coordinate [Ni-Fe-S] cluster. Residues 403-428 form a disordered region; the sequence is RWAEEEEEEEEKAPEEEAPAEEPTME. Residues 405–426 show a composition bias toward acidic residues; it reads AEEEEEEEEKAPEEEAPAEEPT.

The protein belongs to the CdhC family. Monomer. The ACDS complex is made up of alpha, epsilon, beta, gamma and delta chains with a probable stoichiometry of (alpha(2)epsilon(2))(4)-beta(8)-(gamma(1)delta(1))(8). It depends on [Ni-Fe-S] cluster as a cofactor.

It carries out the reaction Co(I)-[corrinoid Fe-S protein] + acetyl-CoA + H(+) = methyl-Co(III)-[corrinoid Fe-S protein] + CO + CoA. Functionally, part of a complex that catalyzes the reversible cleavage of acetyl-CoA, allowing autotrophic growth from CO(2). The alpha-epsilon complex generates CO from CO(2), while the beta subunit (this protein) combines the CO with CoA and a methyl group to form acetyl-CoA. The methyl group, which is incorporated into acetyl-CoA, is transferred to the beta subunit by a corrinoid iron-sulfur protein (the gamma-delta complex). The protein is Acetyl-CoA decarbonylase/synthase complex subunit beta of Methanopyrus kandleri (strain AV19 / DSM 6324 / JCM 9639 / NBRC 100938).